We begin with the raw amino-acid sequence, 502 residues long: Probable mRNA-splicing protein ubp10 (502 aa).

The segment at 56 to 153 adopts a UBP-type; degenerate zinc-finger fold; sequence SQNLYLDTIN…YVMRPTFTKL (98 aa). Positions 89, 92, 108, and 114 each coordinate Zn(2+). Positions 178–501 constitute a USP domain; it reads VGMNNIKNND…ESFIQLWERS (324 aa).

It belongs to the peptidase C19 family.

It localises to the nucleus. Functionally, may play a role in mRNA splicing. It is unsure if the protein really exhibits hydrolase activity. Could be a competitor of ubiquitin C-terminal hydrolases (UCHs). This chain is Probable mRNA-splicing protein ubp10 (ubp10), found in Schizosaccharomyces pombe (strain 972 / ATCC 24843) (Fission yeast).